The following is a 468-amino-acid chain: Cyclin-dependent kinase 14 (468 aa).

Phosphoserine occurs at positions 24, 77, and 94. The disordered stretch occupies residues 103–132 (KTSSAGKESPKVRRHSSPSSPTSPKFGKAD). Residue S133 is modified to Phosphoserine. A Protein kinase domain is found at 134–418 (YEKLEKLGEG…AQAALSHEYF (285 aa)). ATP is bound by residues 140–148 (LGEGSYATV) and K163. The active-site Proton acceptor is the D255. The tract at residues 448-468 (ESMRAFGKNNSYGKSLSNSKH) is disordered. Residues 455–468 (KNNSYGKSLSNSKH) are compositionally biased toward polar residues.

The protein belongs to the protein kinase superfamily. CMGC Ser/Thr protein kinase family. CDC2/CDKX subfamily. In terms of assembly, found in a complex with LRP6, CCNY and CAPRIN2 during G2/M stage; CAPRIN2 functions as a scaffold for the complex by binding to CCNY via its N terminus and to CDK14 via its C terminus. Interacts with CCNY; CCNY mediates its recruitment to the plasma membrane and promotes phosphorylation of LRP6. Interacts with CCDN3 and CDKN1A. Interacts with SEPT8. Interacts with 14-3-3 proteina YWHAB, YWHAE, YWHAH and YWHAQ.

It is found in the cell membrane. It localises to the cytoplasm. The protein localises to the nucleus. It carries out the reaction L-seryl-[protein] + ATP = O-phospho-L-seryl-[protein] + ADP + H(+). The catalysed reaction is L-threonyl-[protein] + ATP = O-phospho-L-threonyl-[protein] + ADP + H(+). Serine/threonine-protein kinase activity is promoted by associated cyclins CCDN3 and CCNY and repressed by CDKN1A. Serine/threonine-protein kinase involved in the control of the eukaryotic cell cycle, whose activity is controlled by an associated cyclin. Acts as a cell-cycle regulator of Wnt signaling pathway during G2/M phase by mediating the phosphorylation of LRP6 at 'Ser-1490', leading to the activation of the Wnt signaling pathway. Acts as a regulator of cell cycle progression and cell proliferation via its interaction with CCDN3. Phosphorylates RB1 in vitro, however the relevance of such result remains to be confirmed in vivo. May also play a role in meiosis, neuron differentiation and may indirectly act as a negative regulator of insulin-responsive glucose transport. This Dasypus novemcinctus (Nine-banded armadillo) protein is Cyclin-dependent kinase 14 (CDK14).